A 116-amino-acid chain; its full sequence is Large ribosomal subunit protein uL18 (116 aa).

It belongs to the universal ribosomal protein uL18 family. As to quaternary structure, part of the 50S ribosomal subunit; part of the 5S rRNA/L5/L18/L25 subcomplex. Contacts the 5S and 23S rRNAs.

Its function is as follows. This is one of the proteins that bind and probably mediate the attachment of the 5S RNA into the large ribosomal subunit, where it forms part of the central protuberance. This chain is Large ribosomal subunit protein uL18, found in Shewanella putrefaciens (strain CN-32 / ATCC BAA-453).